A 302-amino-acid polypeptide reads, in one-letter code: GTP cyclohydrolase FolE2 (302 aa).

This sequence belongs to the GTP cyclohydrolase IV family.

The catalysed reaction is GTP + H2O = 7,8-dihydroneopterin 3'-triphosphate + formate + H(+). Its pathway is cofactor biosynthesis; 7,8-dihydroneopterin triphosphate biosynthesis; 7,8-dihydroneopterin triphosphate from GTP: step 1/1. Functionally, converts GTP to 7,8-dihydroneopterin triphosphate. This Pseudoalteromonas translucida (strain TAC 125) protein is GTP cyclohydrolase FolE2.